The following is a 616-amino-acid chain: D-glucuronyl C5-epimerase (616 aa).

The Cytoplasmic segment spans residues 1 to 12; the sequence is MKCLRWRSNRHR. The chain crosses the membrane as a helical; Signal-anchor for type II membrane protein span at residues 13–29; the sequence is IYLLVACGALFLLNRHL. The Extracellular portion of the chain corresponds to 30 to 616; that stretch reads TQEESRIDEE…YAYGKRAKHN (587 aa). Residues Tyr-136, 141 to 143, and Gln-169 each bind substrate; that span reads RDR. N-linked (GlcNAc...) asparagine glycans are attached at residues Asn-188, Asn-232, Asn-267, and Asn-471. Substrate is bound by residues Tyr-504, Arg-562, and 574-580; that span reads RWDYHAV.

Belongs to the D-glucuronyl C5-epimerase family. In terms of assembly, homodimer. In terms of tissue distribution, expression in comma stage embryos is strong in the hypodermis and intestine and weaker in the head region. In late embryos, larval, and adult stages, expressed primarily in hypodermis and intestine.

It is found in the cell membrane. Its subcellular location is the secreted. The protein localises to the extracellular space. The protein resides in the extracellular matrix. It localises to the basement membrane. It catalyses the reaction [heparosan-N-sulfate](n) = [heparan-N-sulfate](n). Its pathway is glycan metabolism; heparan sulfate biosynthesis. It functions in the pathway glycan metabolism; heparin biosynthesis. Its function is as follows. Converts D-glucuronic acid residues adjacent to N-sulfate sugar residues to L-iduronic acids. Plays a role in the early migration of AQR and PQR neurons, which descend from the Q neuroblasts. The chain is D-glucuronyl C5-epimerase (hse-5) from Caenorhabditis elegans.